Here is a 443-residue protein sequence, read N- to C-terminus: Methyl-coenzyme M reductase subunit beta (443 aa).

Tyr-367 is a binding site for coenzyme M. Gly-369 serves as a coordination point for coenzyme B.

The protein belongs to the methyl-coenzyme M reductase beta subunit family. As to quaternary structure, MCR is a hexamer of two alpha, two beta, and two gamma chains, forming a dimer of heterotrimers. The cofactor is coenzyme F430.

The protein localises to the cytoplasm. It carries out the reaction coenzyme B + methyl-coenzyme M = methane + coenzyme M-coenzyme B heterodisulfide. Its pathway is one-carbon metabolism; methyl-coenzyme M reduction; methane from methyl-coenzyme M: step 1/1. Component of the methyl-coenzyme M reductase (MCR) I that catalyzes the reductive cleavage of methyl-coenzyme M (CoM-S-CH3 or 2-(methylthio)ethanesulfonate) using coenzyme B (CoB or 7-mercaptoheptanoylthreonine phosphate) as reductant which results in the production of methane and the mixed heterodisulfide of CoB and CoM (CoM-S-S-CoB). This is the final step in methanogenesis. The polypeptide is Methyl-coenzyme M reductase subunit beta (mcrB) (Methanococcus voltae).